The chain runs to 1458 residues: DNA polymerase alpha catalytic subunit (1458 aa).

Disordered stretches follow at residues 1–25 and 89–119; these read MSDSGSFAASRSRREKTEKSGRKEA and DLEDNALADSGKGAKGAPKDKTNVKKSSVSK. Basic and acidic residues predominate over residues 15-25; that stretch reads EKTEKSGRKEA. 2 DNA-binding regions span residues 650 to 715 and 1241 to 1373; these read RINS…VHQI and QFRA…ACSK. Zn(2+)-binding residues include cysteine 1280, cysteine 1283, cysteine 1307, cysteine 1312, cysteine 1345, cysteine 1350, cysteine 1368, and cysteine 1371. The segment at 1280–1310 adopts a CysA-type zinc-finger fold; the sequence is CPKCGTENIYDNVFDGSGLQIEPGLKRCSKP. A CysB motif motif is present at residues 1345-1371; that stretch reads CEEKTCQNRTRRLPLSFSRNGPICQAC.

The protein belongs to the DNA polymerase type-B family. In terms of assembly, the DNA polymerase alpha complex is composed of four subunits: the catalytic subunit POLA1, the regulatory subunit POLA2, and the small and the large primase subunits PRIM1 and PRIM2 respectively. Interacts with PARP1; this interaction functions as part of the control of replication fork progression. Interacts with MCM10 and WDHD1; these interactions recruit the polymerase alpha complex to the pre-replicative complex bound to DNA. Interacts with RPA1; this interaction stabilizes the replicative complex and reduces the misincorporation rate of DNA polymerase alpha by acting as a fidelity clamp.

Its subcellular location is the nucleus. It carries out the reaction DNA(n) + a 2'-deoxyribonucleoside 5'-triphosphate = DNA(n+1) + diphosphate. Its function is as follows. Plays an essential role in the initiation of DNA replication. During the S phase of the cell cycle, the DNA polymerase alpha complex (composed of a catalytic subunit POLA1/p180, a regulatory subunit POLA2/p70 and two primase subunits PRIM1/p49 and PRIM2/p58) is recruited to DNA at the replicative forks via direct interactions with MCM10 and WDHD1. The primase subunit of the polymerase alpha complex initiates DNA synthesis by oligomerising short RNA primers on both leading and lagging strands. These primers are initially extended by the polymerase alpha catalytic subunit and subsequently transferred to polymerase delta and polymerase epsilon for processive synthesis on the lagging and leading strand, respectively. The reason this transfer occurs is because the polymerase alpha has limited processivity and lacks intrinsic 3' exonuclease activity for proofreading error, and therefore is not well suited for replicating long complexes. The protein is DNA polymerase alpha catalytic subunit (pola1) of Xenopus laevis (African clawed frog).